The chain runs to 982 residues: MPHSFPDYSFTCPFCKNNCKLSFAQCPAFCPFCGKSQKNESTGLPIQSDFYQIIKSIGKGGMGEVFLAYDPCYERQIAIKKIRSDLLEHPQIKKRFLKEAHMTSQLTHPAIIPIYTIRSDADTAYYTMPFVEGDTLKQIIRKTKLQEKNGETLDYLGGSILALMRVFITICQAVAYAHSKGVLHRDLKPENIIIGKYGEVLILDWGLAKFIDQSPEEELLASFPESLTKQKDITKIGKVVGTVAYMAPERALGQPATIQTDIYSLGVILYQLLTLKSPFKRGTLDEFRKNMSREEWQDPVTAAPYREVPRMLASFTEKCLSLDLQNRYQSVEELIRDIENYLEGRSEWFCIANLNTKEKNDWEFQENVLIAEHVAITRMTDDAEWVSLMISKQSFTGNTKIEADVCLGEQGHGIGFLLSVPEASAREHLIEGYCLWLGSDFSKTTKLLRSNVEVVHAPDIFLKRQQTYHVRIEKVDKSIHVYINDNLQFSYIAHIPLIGTHVGLLSRDADFEISPLEIYVGNLNINVNCLAVPDAFLAHRDYNQALSEYRRIAYSFPDRTEGREALFRAGLTFLEQAKTAENKMPLLEEALNEFEKLHGTPSAPLEYLGKALAYESINDSEEEIKCYELAYRRYPNHPILPMLQEQIISRLHEVSRMQRITTYRFTLLTVRHLPLNKIDTHTKRLFNSLQKHWEVLPFIEYKSPSPLTTLSTRFATPLAFWLAKPFILGEILDDLIQSPPFPIEEVNNALLCLVELGSWEYAQEKLNTIQTYLNLPQNPKWLDLKAFIACHYQTLEDVYKDFFFQIPSTNADHLHAVLYFMDQCLDQLNTSLIYTLARQFEHAELSFEDRLRLNCRRVWAYLLDKNWQDAGNLLYTYSVETLNKDSSLLHFLYGCWLQVTEGAEIANVHFAGVNPVMFPRTWTLGARFLTNNLSKDSYEKAFMWEKRQLCKQLILYYHCVGNETKRIHFQKLYQEQFIHAEL.

The region spanning 51–342 is the Protein kinase domain; the sequence is YQIIKSIGKG…ELIRDIENYL (292 aa). Residues 57-65 and K80 each bind ATP; that span reads IGKGGMGEV. Catalysis depends on D186, which acts as the Proton acceptor.

The protein belongs to the protein kinase superfamily. Ser/Thr protein kinase family. Post-translationally, autophosphorylated on serine and threonine residues.

The enzyme catalyses L-seryl-[protein] + ATP = O-phospho-L-seryl-[protein] + ADP + H(+). It carries out the reaction L-threonyl-[protein] + ATP = O-phospho-L-threonyl-[protein] + ADP + H(+). Its function is as follows. Together with the serine/threonine kinase Pkn1, may play a role in the specific interactions with host proteins during intracellular growth. This is Serine/threonine-protein kinase PknD from Protochlamydia amoebophila (strain UWE25).